Here is a 280-residue protein sequence, read N- to C-terminus: Protease HtpX (280 aa).

A run of 2 helical transmembrane segments spans residues 7 to 26 and 30 to 49; these read TFIL…GLLG and GMLI…YWYS. Residue His-129 coordinates Zn(2+). Glu-130 is a catalytic residue. His-133 serves as a coordination point for Zn(2+). The next 2 helical transmembrane spans lie at 146–166 and 178–198; these read ATIA…SMFG and VVGM…QMAI. Residue Glu-203 coordinates Zn(2+).

The protein belongs to the peptidase M48B family. Zn(2+) serves as cofactor.

It localises to the cell inner membrane. The chain is Protease HtpX from Legionella pneumophila subsp. pneumophila (strain Philadelphia 1 / ATCC 33152 / DSM 7513).